The following is a 304-amino-acid chain: Porphobilinogen deaminase (304 aa).

An S-(dipyrrolylmethanemethyl)cysteine modification is found at C240.

It belongs to the HMBS family. As to quaternary structure, monomer. Dipyrromethane is required as a cofactor.

The enzyme catalyses 4 porphobilinogen + H2O = hydroxymethylbilane + 4 NH4(+). Its pathway is porphyrin-containing compound metabolism; protoporphyrin-IX biosynthesis; coproporphyrinogen-III from 5-aminolevulinate: step 2/4. In terms of biological role, tetrapolymerization of the monopyrrole PBG into the hydroxymethylbilane pre-uroporphyrinogen in several discrete steps. The chain is Porphobilinogen deaminase from Xanthomonas campestris pv. campestris (strain ATCC 33913 / DSM 3586 / NCPPB 528 / LMG 568 / P 25).